Consider the following 116-residue polypeptide: NADH-quinone oxidoreductase subunit A (116 aa).

Transmembrane regions (helical) follow at residues 3–23 (FTLL…VIAL), 61–81 (FAIL…WAVI), and 88–108 (QGLI…AYAW).

The protein belongs to the complex I subunit 3 family. In terms of assembly, NDH-1 is composed of 14 different subunits. Subunits NuoA, H, J, K, L, M, N constitute the membrane sector of the complex.

The protein resides in the cell inner membrane. It catalyses the reaction a quinone + NADH + 5 H(+)(in) = a quinol + NAD(+) + 4 H(+)(out). Functionally, NDH-1 shuttles electrons from NADH, via FMN and iron-sulfur (Fe-S) centers, to quinones in the respiratory chain. The immediate electron acceptor for the enzyme in this species is believed to be a menaquinone. Couples the redox reaction to proton translocation (for every two electrons transferred, four hydrogen ions are translocated across the cytoplasmic membrane), and thus conserves the redox energy in a proton gradient. The polypeptide is NADH-quinone oxidoreductase subunit A (Bacteroides fragilis (strain ATCC 25285 / DSM 2151 / CCUG 4856 / JCM 11019 / LMG 10263 / NCTC 9343 / Onslow / VPI 2553 / EN-2)).